The following is a 129-amino-acid chain: Succinate dehydrogenase cytochrome b556 subunit (129 aa).

Over 1 to 26 (MIRNVKKQRPVNLDLQTIRFPITAIA) the chain is Cytoplasmic. The helical transmembrane segment at 27-52 (SILHRVSGVITFVAVGILLWLLGTSL) threads the bilayer. The Periplasmic portion of the chain corresponds to 53-68 (SSPEGFEQASAIMGSF). The chain crosses the membrane as a helical span at residues 69–89 (FVKFIMWGILTALAYHVVVGI). Heme is bound at residue histidine 84. Residues 90–108 (RHMMMDFGYLEETFEAGKR) are Cytoplasmic-facing. A helical membrane pass occupies residues 109-129 (SAKISFVITVVLSLLAGVLVW).

This sequence belongs to the cytochrome b560 family. As to quaternary structure, part of an enzyme complex containing four subunits: a flavoprotein, an iron-sulfur protein, plus two membrane-anchoring proteins, SdhC and SdhD. The complex can form homotrimers. Requires heme as cofactor.

It is found in the cell inner membrane. Its pathway is carbohydrate metabolism; tricarboxylic acid cycle. Its function is as follows. Membrane-anchoring subunit of succinate dehydrogenase (SDH). The protein is Succinate dehydrogenase cytochrome b556 subunit (sdhC) of Escherichia coli O157:H7.